The following is a 186-amino-acid chain: Small ribosomal subunit protein uS5 (186 aa).

Residues 20 to 83 enclose the S5 DRBM domain; the sequence is FVDKLVHINR…EAAKRDMIFV (64 aa).

It belongs to the universal ribosomal protein uS5 family. In terms of assembly, part of the 30S ribosomal subunit. Contacts proteins S4 and S8.

Its function is as follows. With S4 and S12 plays an important role in translational accuracy. In terms of biological role, located at the back of the 30S subunit body where it stabilizes the conformation of the head with respect to the body. The sequence is that of Small ribosomal subunit protein uS5 from Brucella anthropi (strain ATCC 49188 / DSM 6882 / CCUG 24695 / JCM 21032 / LMG 3331 / NBRC 15819 / NCTC 12168 / Alc 37) (Ochrobactrum anthropi).